Consider the following 427-residue polypeptide: Probable fatty acid methyltransferase Rv3720 (427 aa).

Residues 167–168 (YT), 202–210 (LLDVGCGWG), and 227–232 (TLSAEQ) contribute to the S-adenosyl-L-methionine site.

This sequence belongs to the CFA/CMAS family.

Its function is as follows. May be a S-adenosylmethionine-dependent methyltransferase involved in fatty acid metabolism. This chain is Probable fatty acid methyltransferase Rv3720, found in Mycobacterium tuberculosis (strain ATCC 25618 / H37Rv).